The primary structure comprises 546 residues: Amidase FG08078 (546 aa).

Active-site charge relay system residues include Lys129 and Ser204. Catalysis depends on Ser228, which acts as the Acyl-ester intermediate.

It belongs to the amidase family.

It participates in mycotoxin biosynthesis. In terms of biological role, amidase; part of the gene cluster that mediates the biosynthesis of butenolide, a mycotoxin that shows antibiotic activity but does not seem to play a major role in the spread of head blight in wheat. Butenolide is derived from glutamic acid via a 4-acetamido-2-butenoic acid intermediate. The predicted function of the NADH:flavin oxidoreductase FG08077, the cytochrome P450 monooxygenase FG08079, the decarboxylase FG08083, and the putative acetyltransferase FG08082 are consistent with this pathway, however, the respective activities of the butelonide biosynthesis cluster enzymes have still to be experimentally determined. In Gibberella zeae (strain ATCC MYA-4620 / CBS 123657 / FGSC 9075 / NRRL 31084 / PH-1) (Wheat head blight fungus), this protein is Amidase FG08078.